The chain runs to 841 residues: Envelope glycoprotein H (841 aa).

The N-terminal stretch at 1–17 (MFALVLAVVILPLWTTA) is a signal peptide. N-linked (GlcNAc...) asparagine; by host glycosylation is found at Asn-18, Asn-45, and Asn-217. The Virion surface portion of the chain corresponds to 18–802 (NKSYVTPTPA…ERRQAIRMSG (785 aa)). An interaction with gL region spans residues 246–309 (DSGRVEVNIG…DPGPSYRVYL (64 aa)). N-linked (GlcNAc...) asparagine; by host glycans are attached at residues Asn-317, Asn-499, Asn-522, Asn-760, and Asn-783. Residues 803–823 (QYLGASLGGAFLAVVGFGIIG) traverse the membrane as a helical segment. Residues 824–841 (WMLCGNSRLREYNKIPLT) lie on the Intravirion side of the membrane.

This sequence belongs to the herpesviridae glycoprotein H family. As to quaternary structure, interacts with glycoprotein L (gL); this interaction is necessary for the correct processing and cell surface expression of gH. The heterodimer gH/gL seems to interact with gB trimers during fusion. Post-translationally, N-glycosylated, O-glycosylated, and sialylated.

It localises to the virion membrane. Its subcellular location is the host cell membrane. The protein resides in the host endosome membrane. Its function is as follows. The heterodimer glycoprotein H-glycoprotein L is required for the fusion of viral and plasma membranes leading to virus entry into the host cell. Following initial binding to host receptor, membrane fusion is mediated by the fusion machinery composed of gB and the heterodimer gH/gL. May also be involved in the fusion between the virion envelope and the outer nuclear membrane during virion morphogenesis. In Varicella-zoster virus (strain Oka vaccine) (HHV-3), this protein is Envelope glycoprotein H.